The chain runs to 406 residues: Probable delta-aminolevulinic acid dehydratase 2, chloroplastic (406 aa).

The transit peptide at 1-34 (MTSSMFRSPCKIPSVKGFEQKSYVGLKAASYNVR) directs the protein to the chloroplast. The Schiff-base intermediate with substrate role is filled by lysine 275. Arginine 285 and lysine 291 together coordinate 5-aminolevulinate. Glutamate 307 is a binding site for Mg(2+). Lysine 322 acts as the Schiff-base intermediate with substrate in catalysis. 2 residues coordinate 5-aminolevulinate: serine 348 and tyrosine 387.

This sequence belongs to the ALAD family. In terms of assembly, homooctamer. The cofactor is Mg(2+).

The protein resides in the plastid. It is found in the chloroplast. It carries out the reaction 2 5-aminolevulinate = porphobilinogen + 2 H2O + H(+). It participates in porphyrin-containing compound metabolism; protoporphyrin-IX biosynthesis; coproporphyrinogen-III from 5-aminolevulinate: step 1/4. Its pathway is porphyrin-containing compound metabolism; chlorophyll biosynthesis. Catalyzes an early step in the biosynthesis of tetrapyrroles. Binds two molecules of 5-aminolevulinate per subunit, each at a distinct site, and catalyzes their condensation to form porphobilinogen. This Arabidopsis thaliana (Mouse-ear cress) protein is Probable delta-aminolevulinic acid dehydratase 2, chloroplastic (HEMB2).